We begin with the raw amino-acid sequence, 105 residues long: PTS system lactose-specific EIIA component (105 aa).

One can recognise a PTS EIIA type-3 domain in the interval 4–102 (EEMTLLGFEI…IHHLIELYKR (99 aa)). Histidine 78 acts as the Tele-phosphohistidine intermediate in catalysis. Histidine 78 carries the phosphohistidine; by HPr modification. A Mg(2+)-binding site is contributed by aspartate 81.

As to quaternary structure, homotrimer. The cofactor is Mg(2+).

Its subcellular location is the cytoplasm. Its function is as follows. The phosphoenolpyruvate-dependent sugar phosphotransferase system (sugar PTS), a major carbohydrate active transport system, catalyzes the phosphorylation of incoming sugar substrates concomitantly with their translocation across the cell membrane. The enzyme II LacEF PTS system is involved in lactose transport. In Lactococcus lactis subsp. lactis (Streptococcus lactis), this protein is PTS system lactose-specific EIIA component.